The following is a 261-amino-acid chain: Thiazole synthase (261 aa).

The active-site Schiff-base intermediate with DXP is the lysine 102. 1-deoxy-D-xylulose 5-phosphate-binding positions include glycine 163, 189-190 (AG), and 211-212 (NT).

Belongs to the ThiG family. Homotetramer. Forms heterodimers with either ThiH or ThiS.

It is found in the cytoplasm. It carries out the reaction [ThiS sulfur-carrier protein]-C-terminal-Gly-aminoethanethioate + 2-iminoacetate + 1-deoxy-D-xylulose 5-phosphate = [ThiS sulfur-carrier protein]-C-terminal Gly-Gly + 2-[(2R,5Z)-2-carboxy-4-methylthiazol-5(2H)-ylidene]ethyl phosphate + 2 H2O + H(+). It functions in the pathway cofactor biosynthesis; thiamine diphosphate biosynthesis. Functionally, catalyzes the rearrangement of 1-deoxy-D-xylulose 5-phosphate (DXP) to produce the thiazole phosphate moiety of thiamine. Sulfur is provided by the thiocarboxylate moiety of the carrier protein ThiS. In vitro, sulfur can be provided by H(2)S. The protein is Thiazole synthase of Myxococcus xanthus (strain DK1622).